Here is a 198-residue protein sequence, read N- to C-terminus: Endonuclease V (198 aa).

Positions 38 and 101 each coordinate Mg(2+).

This sequence belongs to the endonuclease V family. The cofactor is Mg(2+).

The protein localises to the cytoplasm. The catalysed reaction is Endonucleolytic cleavage at apurinic or apyrimidinic sites to products with a 5'-phosphate.. Functionally, DNA repair enzyme involved in the repair of deaminated bases. Selectively cleaves double-stranded DNA at the second phosphodiester bond 3' to a deoxyinosine leaving behind the intact lesion on the nicked DNA. The polypeptide is Endonuclease V (Saccharolobus islandicus (strain M.16.27) (Sulfolobus islandicus)).